The chain runs to 625 residues: MAU2 chromatid cohesion factor homolog (625 aa).

TPR repeat units follow at residues 96 to 129 (FDTA…SQNN), 451 to 484 (GGFY…ANAE), and 491 to 524 (SCSL…ASKI). The span at 600-611 (TVPTTETSTSAL) shows a compositional bias: polar residues. Positions 600–625 (TVPTTETSTSALQQPQQPAAQFGQFY) are disordered. The segment covering 612–625 (QQPQQPAAQFGQFY) has biased composition (low complexity).

It belongs to the SCC4/mau-2 family. Interacts with Nipped-B to form the cohesin loading complex.

Its subcellular location is the nucleus. It localises to the nucleoplasm. Required for association of the cohesin complex with chromatin during interphase. Plays a role in sister chromatid cohesion and normal progression through prometaphase. This chain is MAU2 chromatid cohesion factor homolog, found in Drosophila mojavensis (Fruit fly).